Here is a 95-residue protein sequence, read N- to C-terminus: UPF0045 protein CPE1503 (95 aa).

It belongs to the UPF0045 family.

The chain is UPF0045 protein CPE1503 from Clostridium perfringens (strain 13 / Type A).